The sequence spans 401 residues: S-adenosylmethionine synthase (401 aa).

His-16 lines the ATP pocket. Asp-18 contacts Mg(2+). Residue Glu-44 coordinates K(+). 2 residues coordinate L-methionine: Glu-57 and Gln-109. The flexible loop stretch occupies residues Gln-109–Ala-119. ATP is bound by residues Asp-174–Lys-176, Asp-251, Arg-257–Lys-258, Ala-274, and Lys-278. Position 251 (Asp-251) interacts with L-methionine. L-methionine is bound at residue Lys-282.

The protein belongs to the AdoMet synthase family. Homotetramer; dimer of dimers. The cofactor is Mg(2+). Requires K(+) as cofactor.

Its subcellular location is the cytoplasm. It carries out the reaction L-methionine + ATP + H2O = S-adenosyl-L-methionine + phosphate + diphosphate. It functions in the pathway amino-acid biosynthesis; S-adenosyl-L-methionine biosynthesis; S-adenosyl-L-methionine from L-methionine: step 1/1. Catalyzes the formation of S-adenosylmethionine (AdoMet) from methionine and ATP. The overall synthetic reaction is composed of two sequential steps, AdoMet formation and the subsequent tripolyphosphate hydrolysis which occurs prior to release of AdoMet from the enzyme. This Novosphingobium aromaticivorans (strain ATCC 700278 / DSM 12444 / CCUG 56034 / CIP 105152 / NBRC 16084 / F199) protein is S-adenosylmethionine synthase.